The sequence spans 371 residues: ADP-ribosylarginine hydrolase Tri1 (371 aa).

Residues 1 to 61 (MIDLRSPNAL…LQSRACTLTP (61 aa)) are N-terminal extension. The tract at residues 70 to 362 (GALLGLAIGD…LFDRAPQVDE (293 aa)) is ADP-ribosyl hydrolase domain. Residues threonine 112, aspartate 113, aspartate 114, aspartate 157, and aspartate 313 each coordinate Mg(2+).

The protein belongs to the ADP-ribosylglycohydrolase family. It depends on Mg(2+) as a cofactor.

It catalyses the reaction N(omega)-(ADP-D-ribosyl)-L-arginyl-[protein] + H2O = ADP-D-ribose + L-arginyl-[protein]. Immunity component of an interbacterial competition system (also called effector-immunity systems). Expression in E.coli neutralizes the toxic effects of non-cognate S.proteamaculans effector protein Tre1 (Tre1-Sp); cannot be co-purified with Tre1-Sp from E.coli, suggesting they do not form a stable complex. Probably acts as an arginine mono-ADP-ribosylhydrolase, mediating the removal of mono-ADP-ribose attached to arginine residues on proteins. Probably de-ADP-ribosylates FtsZ and possibly other proteins; the ability to hydrolyze ADP-ribosyl moieties is not essential for neutralization of its cognate toxin, strongly suggesting its N-terminal extension occludes the active site of cognate toxin Tre1. This chain is ADP-ribosylarginine hydrolase Tri1, found in Pseudomonas putida (strain GB-1).